The following is a 200-amino-acid chain: Anthranilate synthase component 2 (200 aa).

The region spanning 3–196 (NILLLDNIDS…IHWASLKYIT (194 aa)) is the Glutamine amidotransferase type-1 domain. Residue 57-59 (GPS) participates in L-glutamine binding. The active-site Nucleophile; for GATase activity is Cys84. L-glutamine is bound by residues Gln88 and 134 to 135 (SL). Catalysis depends on for GATase activity residues His170 and Glu172.

As to quaternary structure, heterotetramer consisting of two non-identical subunits: a beta subunit (TrpG) and a large alpha subunit (TrpE).

It catalyses the reaction chorismate + L-glutamine = anthranilate + pyruvate + L-glutamate + H(+). The protein operates within amino-acid biosynthesis; L-tryptophan biosynthesis; L-tryptophan from chorismate: step 1/5. Part of a heterotetrameric complex that catalyzes the two-step biosynthesis of anthranilate, an intermediate in the biosynthesis of L-tryptophan. In the first step, the glutamine-binding beta subunit (TrpG) of anthranilate synthase (AS) provides the glutamine amidotransferase activity which generates ammonia as a substrate that, along with chorismate, is used in the second step, catalyzed by the large alpha subunit of AS (TrpE) to produce anthranilate. In the absence of TrpG, TrpE can synthesize anthranilate directly from chorismate and high concentrations of ammonia. The protein is Anthranilate synthase component 2 (trpG) of Buchnera aphidicola subsp. Acyrthosiphon pisum (strain APS) (Acyrthosiphon pisum symbiotic bacterium).